Consider the following 205-residue polypeptide: Bcl2-associated agonist of cell death (205 aa).

The segment at M1–P139 is disordered. Phosphoserine is present on S67. Over residues I85–H98 the composition is skewed to polar residues. The residue at position 113 (S113) is a Phosphoserine. The span at T118–L128 shows a compositional bias: acidic residues. Phosphoserine is present on S129. Asymmetric dimethylarginine; by PRMT1 occurs at positions 132 and 134. S135 carries the phosphoserine modification. S137 bears the Phosphoserine; by PKA, PKB, PAK1, RPS6KA1, RPS6KB1 and PKC/PRKCQ mark. Residues Y148–S162 carry the BH3 motif. S156 and S171 each carry phosphoserine. A disordered region spans residues G161–Q180.

The protein belongs to the Bcl-2 family. Forms heterodimers with the anti-apoptotic proteins, Bcl-X(L), Bcl-2 and Bcl-W. Also binds protein S100A10. The Ser-113/Ser-137 phosphorylated form binds 14-3-3 proteins. Interacts with AKT1 and PIM3. Interacts with HIF3A (via C-terminus domain); the interaction reduces the binding between BAD and BAX. Interacts (via BH3 domain) with NOL3 (via CARD domain); preventing the association of BAD with BCL2. Interacts with GIMAP3/IAN4 and GIMAP5/IAN5. Phosphorylated at one or more of Ser-113, Ser-137, Ser-156 and Ser-171 in response to survival stimuli, which blocks its pro-apoptotic activity. Phosphorylation on Ser-137 or Ser-113 promotes heterodimerization with 14-3-3 proteins. This interaction then facilitates the phosphorylation at Ser-156, a site within the BH3 motif, leading to the release of Bcl-X(L) and the promotion of cell survival. Ser-137 is the major site of AKT/PKB phosphorylation, Ser-156 the major site of protein kinase A (CAPK) phosphorylation. In terms of processing, methylation at Arg-132 and Arg-134 by PRMT1 inhibits Akt-mediated phosphorylation at Ser-137. Expressed in all tissues tested, including brain, liver, spleen and heart. In the brain, restricted to epithelial cells of the choroid plexus. Isoform alpha is the more abundant form.

It localises to the mitochondrion outer membrane. It is found in the cytoplasm. Its function is as follows. Promotes cell death. Successfully competes for the binding to Bcl-X(L), Bcl-2 and Bcl-W, thereby affecting the level of heterodimerization of these proteins with BAX. Can reverse the death repressor activity of Bcl-X(L), but not that of Bcl-2. Appears to act as a link between growth factor receptor signaling and the apoptotic pathways. The chain is Bcl2-associated agonist of cell death (Bad) from Rattus norvegicus (Rat).